Consider the following 728-residue polypeptide: 1,4-alpha-glucan branching enzyme GlgB (728 aa).

Aspartate 405 acts as the Nucleophile in catalysis. The active-site Proton donor is the glutamate 458.

It belongs to the glycosyl hydrolase 13 family. GlgB subfamily. Monomer.

The catalysed reaction is Transfers a segment of a (1-&gt;4)-alpha-D-glucan chain to a primary hydroxy group in a similar glucan chain.. Its pathway is glycan biosynthesis; glycogen biosynthesis. In terms of biological role, catalyzes the formation of the alpha-1,6-glucosidic linkages in glycogen by scission of a 1,4-alpha-linked oligosaccharide from growing alpha-1,4-glucan chains and the subsequent attachment of the oligosaccharide to the alpha-1,6 position. In Escherichia coli O1:K1 / APEC, this protein is 1,4-alpha-glucan branching enzyme GlgB.